The chain runs to 309 residues: Ferredoxin--NADP reductase (309 aa).

FAD-binding residues include Asp-25, Gln-33, Tyr-38, Val-77, Phe-107, Asp-267, and Thr-307.

Belongs to the ferredoxin--NADP reductase type 2 family. In terms of assembly, homodimer. FAD is required as a cofactor.

The enzyme catalyses 2 reduced [2Fe-2S]-[ferredoxin] + NADP(+) + H(+) = 2 oxidized [2Fe-2S]-[ferredoxin] + NADPH. The chain is Ferredoxin--NADP reductase from Lactobacillus acidophilus (strain ATCC 700396 / NCK56 / N2 / NCFM).